We begin with the raw amino-acid sequence, 362 residues long: Beta-ketoacyl-[acyl-carrier-protein] synthase III 2 (362 aa).

Residues Cys113 and His251 contribute to the active site. Residues 252-256 are ACP-binding; it reads QANIR. The active site involves Asn281.

Belongs to the thiolase-like superfamily. FabH family. Homodimer.

It is found in the cytoplasm. The enzyme catalyses malonyl-[ACP] + acetyl-CoA + H(+) = 3-oxobutanoyl-[ACP] + CO2 + CoA. Its pathway is lipid metabolism; fatty acid biosynthesis. Catalyzes the condensation reaction of fatty acid synthesis by the addition to an acyl acceptor of two carbons from malonyl-ACP. Catalyzes the first condensation reaction which initiates fatty acid synthesis and may therefore play a role in governing the total rate of fatty acid production. Possesses both acetoacetyl-ACP synthase and acetyl transacylase activities. Its substrate specificity determines the biosynthesis of branched-chain and/or straight-chain of fatty acids. This Vibrio vulnificus (strain YJ016) protein is Beta-ketoacyl-[acyl-carrier-protein] synthase III 2.